The sequence spans 152 residues: Endoribonuclease YbeY (152 aa).

3 residues coordinate Zn(2+): His113, His117, and His123.

This sequence belongs to the endoribonuclease YbeY family. Zn(2+) serves as cofactor.

The protein resides in the cytoplasm. Functionally, single strand-specific metallo-endoribonuclease involved in late-stage 70S ribosome quality control and in maturation of the 3' terminus of the 16S rRNA. The polypeptide is Endoribonuclease YbeY (Wolbachia pipientis subsp. Culex pipiens (strain wPip)).